The primary structure comprises 279 residues: Thymidylate synthase (279 aa).

Residue 133-134 (RR) coordinates dUMP. Cys154 functions as the Nucleophile in the catalytic mechanism. Residues 178 to 181 (RSND), Asn189, and 219 to 221 (HIY) contribute to the dUMP site. Asp181 is a binding site for (6R)-5,10-methylene-5,6,7,8-tetrahydrofolate. (6R)-5,10-methylene-5,6,7,8-tetrahydrofolate is bound at residue Ala278.

This sequence belongs to the thymidylate synthase family. Bacterial-type ThyA subfamily. Homodimer.

It localises to the cytoplasm. It catalyses the reaction dUMP + (6R)-5,10-methylene-5,6,7,8-tetrahydrofolate = 7,8-dihydrofolate + dTMP. It participates in pyrimidine metabolism; dTTP biosynthesis. Catalyzes the reductive methylation of 2'-deoxyuridine-5'-monophosphate (dUMP) to 2'-deoxythymidine-5'-monophosphate (dTMP) while utilizing 5,10-methylenetetrahydrofolate (mTHF) as the methyl donor and reductant in the reaction, yielding dihydrofolate (DHF) as a by-product. This enzymatic reaction provides an intracellular de novo source of dTMP, an essential precursor for DNA biosynthesis. The protein is Thymidylate synthase of Streptococcus pyogenes serotype M3 (strain SSI-1).